We begin with the raw amino-acid sequence, 447 residues long: Argininosuccinate synthase (447 aa).

ATP is bound by residues 17 to 25 and Ala43; that span reads AFSGGLDTS. Residue Tyr99 participates in L-citrulline binding. The ATP site is built by Gly129 and Thr131. 3 residues coordinate L-aspartate: Thr131, Asn135, and Asp136. Position 135 (Asn135) interacts with L-citrulline. ATP is bound at residue Asp136. Arg139 and Ser192 together coordinate L-citrulline. Asp194 provides a ligand contact to ATP. Residues Thr201, Glu203, and Glu280 each contribute to the L-citrulline site.

This sequence belongs to the argininosuccinate synthase family. Type 2 subfamily. As to quaternary structure, homotetramer.

Its subcellular location is the cytoplasm. The catalysed reaction is L-citrulline + L-aspartate + ATP = 2-(N(omega)-L-arginino)succinate + AMP + diphosphate + H(+). It participates in amino-acid biosynthesis; L-arginine biosynthesis; L-arginine from L-ornithine and carbamoyl phosphate: step 2/3. This Salmonella typhi protein is Argininosuccinate synthase (argG).